We begin with the raw amino-acid sequence, 321 residues long: Beta-ketoacyl-[acyl-carrier-protein] synthase III (321 aa).

Active-site residues include cysteine 115 and histidine 248. Residues 249–253 are ACP-binding; the sequence is QANIR. Residue asparagine 278 is part of the active site.

This sequence belongs to the thiolase-like superfamily. FabH family. Homodimer.

The protein localises to the cytoplasm. It carries out the reaction malonyl-[ACP] + acetyl-CoA + H(+) = 3-oxobutanoyl-[ACP] + CO2 + CoA. It participates in lipid metabolism; fatty acid biosynthesis. Its function is as follows. Catalyzes the condensation reaction of fatty acid synthesis by the addition to an acyl acceptor of two carbons from malonyl-ACP. Catalyzes the first condensation reaction which initiates fatty acid synthesis and may therefore play a role in governing the total rate of fatty acid production. Possesses both acetoacetyl-ACP synthase and acetyl transacylase activities. Its substrate specificity determines the biosynthesis of branched-chain and/or straight-chain of fatty acids. In Aromatoleum aromaticum (strain DSM 19018 / LMG 30748 / EbN1) (Azoarcus sp. (strain EbN1)), this protein is Beta-ketoacyl-[acyl-carrier-protein] synthase III.